We begin with the raw amino-acid sequence, 161 residues long: Large ribosomal subunit protein uL15 (161 aa).

Residues 1 to 41 (MTKLNELAPAPGSTKGRMRVGRGPGSGKGKTAGRGVKGQKA) are disordered. Residues 22-36 (RGPGSGKGKTAGRGV) show a composition bias toward gly residues.

It belongs to the universal ribosomal protein uL15 family. As to quaternary structure, part of the 50S ribosomal subunit.

Binds to the 23S rRNA. The chain is Large ribosomal subunit protein uL15 from Caulobacter sp. (strain K31).